Consider the following 243-residue polypeptide: 5'-methylthioadenosine/S-adenosylhomocysteine nucleosidase (243 aa).

The active-site Proton acceptor is the glutamate 12. Substrate-binding positions include glycine 78, methionine 158, and 179 to 180 (ME). The active-site Proton donor is aspartate 203.

This sequence belongs to the PNP/UDP phosphorylase family. MtnN subfamily.

It carries out the reaction S-adenosyl-L-homocysteine + H2O = S-(5-deoxy-D-ribos-5-yl)-L-homocysteine + adenine. It catalyses the reaction S-methyl-5'-thioadenosine + H2O = 5-(methylsulfanyl)-D-ribose + adenine. The enzyme catalyses 5'-deoxyadenosine + H2O = 5-deoxy-D-ribose + adenine. The protein operates within amino-acid biosynthesis; L-methionine biosynthesis via salvage pathway; S-methyl-5-thio-alpha-D-ribose 1-phosphate from S-methyl-5'-thioadenosine (hydrolase route): step 1/2. Catalyzes the irreversible cleavage of the glycosidic bond in both 5'-methylthioadenosine (MTA) and S-adenosylhomocysteine (SAH/AdoHcy) to adenine and the corresponding thioribose, 5'-methylthioribose and S-ribosylhomocysteine, respectively. Also cleaves 5'-deoxyadenosine, a toxic by-product of radical S-adenosylmethionine (SAM) enzymes, into 5-deoxyribose and adenine. This Colwellia psychrerythraea (strain 34H / ATCC BAA-681) (Vibrio psychroerythus) protein is 5'-methylthioadenosine/S-adenosylhomocysteine nucleosidase.